The chain runs to 249 residues: ATP synthase subunit a, chloroplastic (249 aa).

The next 5 helical transmembrane spans lie at 38-58 (AQVL…AVLA), 97-117 (VPFI…GALL), 136-156 (INTT…AGLH), 201-221 (LVVA…MMFL), and 222-242 (GLFT…AYIG).

This sequence belongs to the ATPase A chain family. F-type ATPases have 2 components, CF(1) - the catalytic core - and CF(0) - the membrane proton channel. CF(1) has five subunits: alpha(3), beta(3), gamma(1), delta(1), epsilon(1). CF(0) has four main subunits: a, b, b' and c.

It is found in the plastid. Its subcellular location is the chloroplast thylakoid membrane. Functionally, key component of the proton channel; it plays a direct role in the translocation of protons across the membrane. In Physcomitrium patens (Spreading-leaved earth moss), this protein is ATP synthase subunit a, chloroplastic.